A 167-amino-acid chain; its full sequence is HVA22-like protein b (167 aa).

The next 3 helical transmembrane spans lie at 18-38, 47-67, and 68-88; these read VIAG…RAIE, QWLT…TFFR, and LLEW…WLVL.

It belongs to the DP1 family. In terms of tissue distribution, predominantly expressed in flower buds.

It is found in the membrane. This chain is HVA22-like protein b (HVA22B), found in Arabidopsis thaliana (Mouse-ear cress).